Reading from the N-terminus, the 121-residue chain is UPF0102 protein XF_0554 (121 aa).

Belongs to the UPF0102 family.

The polypeptide is UPF0102 protein XF_0554 (Xylella fastidiosa (strain 9a5c)).